The primary structure comprises 149 residues: Large ribosomal subunit protein uL15 (149 aa).

Residues 1–12 (MSEPIKLHDLRP) show a composition bias toward basic and acidic residues. A disordered region spans residues 1-55 (MSEPIKLHDLRPAKGANKPKTRVGRGEASKGKTAGRGTKGTKARKQVSAAFEGGQ).

The protein belongs to the universal ribosomal protein uL15 family. As to quaternary structure, part of the 50S ribosomal subunit.

In terms of biological role, binds to the 23S rRNA. The chain is Large ribosomal subunit protein uL15 from Corynebacterium kroppenstedtii (strain DSM 44385 / JCM 11950 / CIP 105744 / CCUG 35717).